We begin with the raw amino-acid sequence, 269 residues long: Phosphatidylglycerol--prolipoprotein diacylglyceryl transferase (269 aa).

7 helical membrane passes run 10-30 (VALA…LIGI), 56-76 (MVFW…VLFY), 92-112 (WKGG…AWWF), 120-140 (FFEL…AGRI), 174-194 (PSQL…LWLF), 202-222 (MAVS…VEFV), and 237-257 (LTMG…LIWL). A 1,2-diacyl-sn-glycero-3-phospho-(1'-sn-glycerol) is bound at residue arginine 139.

The protein belongs to the Lgt family.

The protein localises to the cell inner membrane. It catalyses the reaction L-cysteinyl-[prolipoprotein] + a 1,2-diacyl-sn-glycero-3-phospho-(1'-sn-glycerol) = an S-1,2-diacyl-sn-glyceryl-L-cysteinyl-[prolipoprotein] + sn-glycerol 1-phosphate + H(+). It participates in protein modification; lipoprotein biosynthesis (diacylglyceryl transfer). In terms of biological role, catalyzes the transfer of the diacylglyceryl group from phosphatidylglycerol to the sulfhydryl group of the N-terminal cysteine of a prolipoprotein, the first step in the formation of mature lipoproteins. The sequence is that of Phosphatidylglycerol--prolipoprotein diacylglyceryl transferase from Pseudomonas fluorescens (strain ATCC BAA-477 / NRRL B-23932 / Pf-5).